The chain runs to 717 residues: Polyribonucleotide nucleotidyltransferase (717 aa).

Mg(2+) contacts are provided by Asp496 and Asp502. Residues 563 to 622 form the KH domain; the sequence is PRLLSFKIDPEMIGLVIGPGGKTIKGITEETGVKIDIDDDGTVTIAAADGEKAKQACNII. The 69-residue stretch at 632–700 folds into the S1 motif domain; sequence GDVYVGRVTR…SKGRVNLTRL (69 aa).

This sequence belongs to the polyribonucleotide nucleotidyltransferase family. Requires Mg(2+) as cofactor.

It is found in the cytoplasm. It carries out the reaction RNA(n+1) + phosphate = RNA(n) + a ribonucleoside 5'-diphosphate. Its function is as follows. Involved in mRNA degradation. Catalyzes the phosphorolysis of single-stranded polyribonucleotides processively in the 3'- to 5'-direction. The chain is Polyribonucleotide nucleotidyltransferase from Trichodesmium erythraeum (strain IMS101).